The sequence spans 210 residues: 3-oxo-tetronate 4-phosphate decarboxylase (210 aa).

The active-site Proton acceptor is the glutamate 74. Zn(2+)-binding residues include glutamate 74, histidine 93, and histidine 95. Residue tyrosine 120 is the Proton donor of the active site. Histidine 160 contributes to the Zn(2+) binding site.

The protein belongs to the aldolase class II family. AraD/FucA subfamily. Zn(2+) is required as a cofactor.

It carries out the reaction 3-dehydro-4-O-phospho-D-erythronate + H(+) = dihydroxyacetone phosphate + CO2. The catalysed reaction is 3-dehydro-4-O-phospho-L-erythronate + H(+) = dihydroxyacetone phosphate + CO2. Functionally, catalyzes the decarboxylation of 3-oxo-tetronate 4-phosphate to dihydroxyacetone phosphate (DHAP) and CO(2). This Haemophilus influenzae (strain ATCC 51907 / DSM 11121 / KW20 / Rd) protein is 3-oxo-tetronate 4-phosphate decarboxylase.